We begin with the raw amino-acid sequence, 261 residues long: SLA class II histocompatibility antigen, DQ haplotype C beta chain (261 aa).

A signal peptide spans 1–31 (MSGMVALRLPRGLWTAALTVMLVVLGAPVAE). Residues 32–126 (GRDSPQDFVF…IEEGTTLQRR (95 aa)) form a beta-1 region. The Extracellular portion of the chain corresponds to 32-230 (GRDSPQDFVF…RAQSESAQSK (199 aa)). 2 cysteine pairs are disulfide-bonded: C47-C111 and C149-C205. N51 is a glycosylation site (N-linked (GlcNAc...) asparagine). Positions 127–220 (VQPTVTISPS…SLQNPILVEW (94 aa)) are beta-2. The Ig-like C1-type domain occupies 129–233 (PTVTISPSKA…SESAQSKMLS (105 aa)). The tract at residues 221 to 230 (RAQSESAQSK) is connecting peptide. Residues 231–251 (MLSGVGGFVLGLIFLGLGLFI) traverse the membrane as a helical segment. The Cytoplasmic portion of the chain corresponds to 252 to 261 (RHRSQKGLVR).

The protein belongs to the MHC class II family.

The protein resides in the membrane. The chain is SLA class II histocompatibility antigen, DQ haplotype C beta chain from Sus scrofa (Pig).